Here is a 146-residue protein sequence, read N- to C-terminus: D-aminoacyl-tRNA deacylase (146 aa).

A Gly-cisPro motif, important for rejection of L-amino acids motif is present at residues 138–139; that stretch reads GP.

It belongs to the DTD family. As to quaternary structure, homodimer.

It localises to the cytoplasm. It catalyses the reaction glycyl-tRNA(Ala) + H2O = tRNA(Ala) + glycine + H(+). It carries out the reaction a D-aminoacyl-tRNA + H2O = a tRNA + a D-alpha-amino acid + H(+). In terms of biological role, an aminoacyl-tRNA editing enzyme that deacylates mischarged D-aminoacyl-tRNAs. Also deacylates mischarged glycyl-tRNA(Ala), protecting cells against glycine mischarging by AlaRS. Acts via tRNA-based rather than protein-based catalysis; rejects L-amino acids rather than detecting D-amino acids in the active site. By recycling D-aminoacyl-tRNA to D-amino acids and free tRNA molecules, this enzyme counteracts the toxicity associated with the formation of D-aminoacyl-tRNA entities in vivo and helps enforce protein L-homochirality. The protein is D-aminoacyl-tRNA deacylase of Tolumonas auensis (strain DSM 9187 / NBRC 110442 / TA 4).